The primary structure comprises 776 residues: MRQNYDDRKIVKQYREIARQIVKKEGLYKNMDQAELCEQTNFWREKFKTKPMTDRDKINIFALAREAASRIIGLDAVVVQLIGALVLGDGKVAEMKTGEGKTLMSLFVMFIEVMRGNRVHLVTANEYLARRDREEIGQVLEYLGVSVALNESGLDIAQKKAIYTADVIYGTASEFGFDYLRDNMVRQKEDKVQSGLDFVLIDEADSILIDEARTPLLISDRKEEDLSLYHTANKLVKKMMKDDYEMEEHKRFVWLNDAGIEKAQKFWGVESLYSAEAQSELRITMLLMRAHFLMHKDKDYVVLDDEVLIIDPHTGRALPGRRFNDGLHQAIEAKEGVEVKEESRTLATITIQNYFRMYKKISGMTGTAKTEEEEFRQIYNMDVVVIPTNLRVNREDMQDDIFYTKKEKGRAIVYEVSWRYEKGQPTLIGTSSIKSNEWISGLLDAAGIPHQVLNAKNHAQEAEIIAKAGKRGMVTLATNMAGRGTDIKLDPDVHKLGGLAVIGTERHESRRIDLQLMGRSGRRGDPGFSKFMISLEDDLLEQFESKSWEKLSTKLKRKAPRDGKPVNSRKIHAVVVDAQKRLEGANYDIRKDLLSYDEVIDLQRKMVYKERDLLLERNKLGVSSEKILREVAEYSFIHPSDIPEEELEIYYSRQKELLGGTKFPISFDQVTLMDPREVVEEIVSWHKKERNKFPAETIAAIEREVYLNLMDQMWVMHLDAMVQLREGIHLRAYGQQDPLVMYQKEGAQLFEKFQADYHFYFAHALLELDPDGLIQG.

ATP-binding positions include Q80, G98–T102, and D486.

Belongs to the SecA family. As to quaternary structure, monomer and homodimer. Part of the essential Sec protein translocation apparatus which comprises SecA, SecYEG and auxiliary proteins SecDF. Other proteins may also be involved.

It is found in the cell membrane. The protein resides in the cytoplasm. It catalyses the reaction ATP + H2O + cellular proteinSide 1 = ADP + phosphate + cellular proteinSide 2.. Functionally, part of the Sec protein translocase complex. Interacts with the SecYEG preprotein conducting channel. Has a central role in coupling the hydrolysis of ATP to the transfer of proteins into and across the cell membrane, serving as an ATP-driven molecular motor driving the stepwise translocation of polypeptide chains across the membrane. This Listeria monocytogenes serotype 4b (strain F2365) protein is Protein translocase subunit SecA 2.